Here is a 160-residue protein sequence, read N- to C-terminus: Probable prefoldin subunit 5 (160 aa).

Belongs to the prefoldin subunit alpha family. Heterohexamer of two PFD-alpha type and four PFD-beta type subunits.

Its function is as follows. Binds specifically to cytosolic chaperonin (c-CPN) and transfers target proteins to it. Binds to nascent polypeptide chain and promotes folding in an environment in which there are many competing pathways for nonnative proteins. The chain is Probable prefoldin subunit 5 (pfdn5) from Dictyostelium discoideum (Social amoeba).